The chain runs to 317 residues: Zinc finger protein 771 (317 aa).

K33 is covalently cross-linked (Glycyl lysine isopeptide (Lys-Gly) (interchain with G-Cter in SUMO2)). 8 consecutive C2H2-type zinc fingers follow at residues 63–85 (HACP…ARTH), 91–113 (FACT…GRTH), 119–141 (YQCP…RRRH), 147–169 (YACA…LRVH), 175–197 (YACP…RRTH), 203–225 (YACA…RRVH), 231–253 (HRCA…ARTH), and 259–281 (YPCT…RRAH).

This sequence belongs to the krueppel C2H2-type zinc-finger protein family.

The protein resides in the nucleus. May be involved in transcriptional regulation. In Mus musculus (Mouse), this protein is Zinc finger protein 771 (Znf771).